The chain runs to 327 residues: Probable cell division protein WhiA (327 aa).

The H-T-H motif DNA-binding region spans 275–308 (SLEELGQLADPPMTKDAVAGRIRRLLSMADRKAK). Residues 306–327 (KAKETGIPDTESAVTADLLDDA) form a disordered region.

The protein belongs to the WhiA family.

Its function is as follows. Involved in cell division and chromosome segregation. This is Probable cell division protein WhiA from Rhodococcus jostii (strain RHA1).